A 153-amino-acid chain; its full sequence is ORM1-like protein 3 (153 aa).

The important for ceramide level-sensing stretch occupies residues 1-17; it reads MNVGTAHSEVNPNTRVM. At 1–21 the chain is on the cytoplasmic side; sequence MNVGTAHSEVNPNTRVMNSRG. 2 helical membrane-spanning segments follow: residues 22-42 and 43-63; these read IWLSYVLAIGLLHVVLLSIPF and VSVPVVWTLTNLIHNLGMYIF. Residues 64-94 are Cytoplasmic-facing; it reads LHTVKGTPFETPDQGKARLLTHWEQMDYGVQ. Residues 95 to 117 traverse the membrane as a helical segment; that stretch reads FTASRKFLTITPIVLYFLTSFYT. Residues 118–121 are Extracellular-facing; the sequence is KYDQ. Residues 122 to 142 traverse the membrane as a helical segment; the sequence is VHFILNTVSLMSVLIPKLPQL. A Hydroxyproline modification is found at Pro-137. The Cytoplasmic segment spans residues 143–153; sequence HGVRIFGINKY.

It belongs to the ORM family. Ceramide-sensitive subunit of the serine palmitoyltransferase (SPT) complex, which is also composed of SPTLC1, SPTLC2/3 and SPTSSA/B. When hydroxylated at Pro-137, ubiquitinated via 'Lys-48'-linkage, leading to proteasomal degradation. In endothelial cells, ORMDL3 proteasomal degradation is controlled by the sphingosine 1-phosphate receptor signaling pathway.

The protein localises to the endoplasmic reticulum membrane. Functionally, plays an essential role in the homeostatic regulation of sphingolipid de novo biosynthesis by modulating the activity of the serine palmitoyltransferase (SPT) in response to ceramide levels. When complexed to SPT, the binding of ceramides to its N-terminus stabilizes a conformation that block SPT substrate entry, hence preventing SPT catalytic activity. Through this mechanism, maintains ceramide levels at sufficient concentrations for the production of complex sphingolipids, but which prevents the accumulation of ceramides to levels that trigger apoptosis. This chain is ORM1-like protein 3 (Ormdl3), found in Rattus norvegicus (Rat).